We begin with the raw amino-acid sequence, 103 residues long: uncharacterized protein (103 aa).

A run of 3 helical transmembrane segments spans residues 1–21 (MPGVIFWTIFIIQFMIWVFLS), 29–49 (IAFIWGTMPFLALYLKYTGYF), and 69–89 (VVEWSYLVVQTTVPSWIGLLF).

The protein localises to the cell membrane. This is an uncharacterized protein from Methanocaldococcus jannaschii (strain ATCC 43067 / DSM 2661 / JAL-1 / JCM 10045 / NBRC 100440) (Methanococcus jannaschii).